The following is a 450-amino-acid chain: Acyltransferase GLAUCE (450 aa).

Residues histidine 171 and glutamate 394 each act as proton acceptor in the active site.

Belongs to the plant acyltransferase family. In terms of tissue distribution, restricted to the central cells of embryo sacs.

It is found in the cytoplasm. The protein resides in the nucleus. In terms of biological role, required for double fertilization of the egg cell and the central cell by two sperm cells, resulting in the formation of the embryo and the endosperm. Involved in the regulation of embryonic expression of PHE1. Essential in maternal tissues to ensure the paternal embryonic expression of several genes, including RPS5a and FAC1, both of which being essential for early embryo and endosperm development in fertilized seeds. This is Acyltransferase GLAUCE from Arabidopsis thaliana (Mouse-ear cress).